Reading from the N-terminus, the 187-residue chain is Pyridoxal 5'-phosphate synthase subunit PdxT (187 aa).

Residue 47–49 coordinates L-glutamine; the sequence is GES. Residue Cys-76 is the Nucleophile of the active site. L-glutamine-binding positions include Arg-102 and 128–129; that span reads IR. Catalysis depends on charge relay system residues His-165 and Glu-167.

This sequence belongs to the glutaminase PdxT/SNO family. In terms of assembly, in the presence of PdxS, forms a dodecamer of heterodimers. Only shows activity in the heterodimer.

It catalyses the reaction aldehydo-D-ribose 5-phosphate + D-glyceraldehyde 3-phosphate + L-glutamine = pyridoxal 5'-phosphate + L-glutamate + phosphate + 3 H2O + H(+). The catalysed reaction is L-glutamine + H2O = L-glutamate + NH4(+). It functions in the pathway cofactor biosynthesis; pyridoxal 5'-phosphate biosynthesis. Catalyzes the hydrolysis of glutamine to glutamate and ammonia as part of the biosynthesis of pyridoxal 5'-phosphate. The resulting ammonia molecule is channeled to the active site of PdxS. The chain is Pyridoxal 5'-phosphate synthase subunit PdxT from Methanococcus vannielii (strain ATCC 35089 / DSM 1224 / JCM 13029 / OCM 148 / SB).